The primary structure comprises 250 residues: Aquaporin TIP1-1 (250 aa).

2 consecutive transmembrane segments (helical) span residues 24–44 (FAEFISTLIFVFAGQGSGMAF) and 56–76 (AGLIAAAVAHAFALFVAVSVG). An NPA 1 motif is present at residues 85–87 (NPA). 3 consecutive transmembrane segments (helical) span residues 104–126 (LLYWVAQLLGSTVACFLLRFSTG), 143–163 (ALVLEIVMTFGLVYTVYATAV), and 172–192 (TIAPIAIGFIVGANILVGGAF). The short motif at 198–200 (NPA) is the NPA 2 element. The chain crosses the membrane as a helical span at residues 218-238 (YWVGPLIGGGLAGVIYELLFI).

This sequence belongs to the MIP/aquaporin (TC 1.A.8) family. TIP (TC 1.A.8.10) subfamily. Expressed in roots, shoots, leaves, tassels, ears and embryos. Expressed in meristems and zones of cell enlargement: tips of primary and lateral roots, leaf primordia, and male and female inflorescence meristems. Highly expressed in the root epidermis and endodermis, parenchyma cells surrounding mature xylem vessels in the root and the stem, phloem companion cells and a ring of cells around the phloem strand in the stem and the leaf sheath, and the basal endosperm transfer cells in developing kernels.

It localises to the vacuole membrane. In terms of biological role, water channel required to facilitate the transport of water across cell membrane. May support the rapid influx of water into vacuoles during cell expansion, permit osmotic equilibration between the cytosol and the vacuolar content and rapid transcellular water flow through living cells. Its function is impaired by Hg(2+). This is Aquaporin TIP1-1 (TIP1-1) from Zea mays (Maize).